Consider the following 141-residue polypeptide: Hemoglobin subunit alpha (141 aa).

The Globin domain maps to 1–141 (VLSADDKANV…VSTVLTSKYR (141 aa)). Ser-3 is modified (phosphoserine). N6-succinyllysine is present on residues Lys-7 and Lys-11. Position 16 is an N6-acetyllysine; alternate (Lys-16). Residue Lys-16 is modified to N6-succinyllysine; alternate. Phosphotyrosine is present on Tyr-24. At Ser-35 the chain carries Phosphoserine. Lys-40 carries the N6-succinyllysine modification. Phosphoserine is present on Ser-49. Position 58 (His-58) interacts with O2. His-87 lines the heme b pocket. Ser-102 is subject to Phosphoserine. Thr-108 bears the Phosphothreonine mark. Phosphoserine occurs at positions 124 and 131. 2 positions are modified to phosphothreonine: Thr-134 and Thr-137. Ser-138 is modified (phosphoserine).

Belongs to the globin family. In terms of assembly, heterotetramer of two alpha chains and two beta chains. Red blood cells.

Involved in oxygen transport from the lung to the various peripheral tissues. This is Hemoglobin subunit alpha from Peromyscus californicus (California mouse).